We begin with the raw amino-acid sequence, 256 residues long: Hydroxyacylglutathione hydrolase (256 aa).

Residues histidine 57, histidine 59, aspartate 61, histidine 62, histidine 115, aspartate 134, and histidine 172 each coordinate Zn(2+).

It belongs to the metallo-beta-lactamase superfamily. Glyoxalase II family. As to quaternary structure, monomer. It depends on Zn(2+) as a cofactor.

The catalysed reaction is an S-(2-hydroxyacyl)glutathione + H2O = a 2-hydroxy carboxylate + glutathione + H(+). Its pathway is secondary metabolite metabolism; methylglyoxal degradation; (R)-lactate from methylglyoxal: step 2/2. Thiolesterase that catalyzes the hydrolysis of S-D-lactoyl-glutathione to form glutathione and D-lactic acid. The sequence is that of Hydroxyacylglutathione hydrolase from Rhizobium johnstonii (strain DSM 114642 / LMG 32736 / 3841) (Rhizobium leguminosarum bv. viciae).